Here is a 479-residue protein sequence, read N- to C-terminus: Adenosylhomocysteinase (479 aa).

Positions 66, 142, and 203 each coordinate substrate. 204–206 (TTT) is a binding site for NAD(+). The substrate site is built by Lys-233 and Asp-237. Residues Asn-238, 267-272 (GYGDVG), Glu-290, Asn-325, 346-348 (IGH), and Asn-394 contribute to the NAD(+) site.

The protein belongs to the adenosylhomocysteinase family. NAD(+) is required as a cofactor.

It localises to the cytoplasm. It catalyses the reaction S-adenosyl-L-homocysteine + H2O = L-homocysteine + adenosine. It participates in amino-acid biosynthesis; L-homocysteine biosynthesis; L-homocysteine from S-adenosyl-L-homocysteine: step 1/1. In terms of biological role, may play a key role in the regulation of the intracellular concentration of adenosylhomocysteine. The polypeptide is Adenosylhomocysteinase (Nitratidesulfovibrio vulgaris (strain DSM 19637 / Miyazaki F) (Desulfovibrio vulgaris)).